A 339-amino-acid polypeptide reads, in one-letter code: Anthranilate phosphoribosyltransferase (339 aa).

5-phospho-alpha-D-ribose 1-diphosphate is bound by residues Gly-81, 84–85 (GD), Thr-89, 91–94 (NVST), 109–117 (KHGNRSVSS), and Ser-121. An anthranilate-binding site is contributed by Gly-81. Ser-93 contacts Mg(2+). Position 112 (Asn-112) interacts with anthranilate. Position 167 (Arg-167) interacts with anthranilate. Residues Asp-226 and Glu-227 each coordinate Mg(2+).

This sequence belongs to the anthranilate phosphoribosyltransferase family. In terms of assembly, homodimer. Mg(2+) serves as cofactor.

The enzyme catalyses N-(5-phospho-beta-D-ribosyl)anthranilate + diphosphate = 5-phospho-alpha-D-ribose 1-diphosphate + anthranilate. Its pathway is amino-acid biosynthesis; L-tryptophan biosynthesis; L-tryptophan from chorismate: step 2/5. Its function is as follows. Catalyzes the transfer of the phosphoribosyl group of 5-phosphorylribose-1-pyrophosphate (PRPP) to anthranilate to yield N-(5'-phosphoribosyl)-anthranilate (PRA). The sequence is that of Anthranilate phosphoribosyltransferase from Persephonella marina (strain DSM 14350 / EX-H1).